Here is a 115-residue protein sequence, read N- to C-terminus: Pre-histone-like nucleoprotein (115 aa).

Positions 2 to 23 are excised as a propeptide; sequence PILISPSDNTGWGLGKLRIRAT. The span at 85-99 shows a compositional bias: basic residues; that stretch reads GRRTARSARRRSARK. The interval 85-115 is disordered; that stretch reads GRRTARSARRRSARKSRSEKTGPRIRYTRRI. The Nuclear localization signal signature appears at 114–115; sequence RI.

Belongs to the adenoviridae histone-like nucleoprotein family. As to quaternary structure, interacts with the core-capsid bridging protein; this interaction bridges the virus core to the capsid. Interacts with host NPM1; this interaction might play a role in placing the pre-histone-like nucleoprotein on the viral DNA or regulating viral gene expression. Interacts with host HMGB1; this interaction inhibits host immune response. Post-translationally, cleaved near the N-terminus by the viral protease during virion maturation to form the mature protein.

It is found in the virion. The protein localises to the host nucleus. Its subcellular location is the host nucleolus. Plays a role in the inhibition of host immune response within the nucleus. Interacts with cellular nucleosomes and immobilizes the host immune danger signal HMGB1 on chromatin. In turn, prevents HMGB1 release out of the cell and thus decreases inflammation. Also plays a role in the wrapping and condensation of the viral DNA. May also promote viral genome import into the nucleus. This chain is Pre-histone-like nucleoprotein, found in Pantherophis guttatus (Corn snake).